A 308-amino-acid chain; its full sequence is ADP-L-glycero-D-manno-heptose-6-epimerase (308 aa).

Residues 10 to 11 (MI), 31 to 32 (DN), lysine 38, lysine 53, 75 to 79 (EGACS), and asparagine 92 each bind NADP(+). Tyrosine 139 serves as the catalytic Proton acceptor. Residue lysine 143 coordinates NADP(+). Substrate is bound at residue asparagine 168. Residues valine 169 and lysine 177 each coordinate NADP(+). Lysine 177 serves as the catalytic Proton acceptor. Residues serine 179, histidine 186, 200–203 (FAGS), arginine 208, and tyrosine 271 each bind substrate.

This sequence belongs to the NAD(P)-dependent epimerase/dehydratase family. HldD subfamily. Homopentamer. Requires NADP(+) as cofactor.

It catalyses the reaction ADP-D-glycero-beta-D-manno-heptose = ADP-L-glycero-beta-D-manno-heptose. The protein operates within nucleotide-sugar biosynthesis; ADP-L-glycero-beta-D-manno-heptose biosynthesis; ADP-L-glycero-beta-D-manno-heptose from D-glycero-beta-D-manno-heptose 7-phosphate: step 4/4. Its function is as follows. Catalyzes the interconversion between ADP-D-glycero-beta-D-manno-heptose and ADP-L-glycero-beta-D-manno-heptose via an epimerization at carbon 6 of the heptose. This Mannheimia succiniciproducens (strain KCTC 0769BP / MBEL55E) protein is ADP-L-glycero-D-manno-heptose-6-epimerase.